Consider the following 252-residue polypeptide: 5'-nucleotidase SurE (252 aa).

4 residues coordinate a divalent metal cation: Asp-8, Asp-9, Ser-40, and Asn-93.

This sequence belongs to the SurE nucleotidase family. Requires a divalent metal cation as cofactor.

It localises to the cytoplasm. The enzyme catalyses a ribonucleoside 5'-phosphate + H2O = a ribonucleoside + phosphate. Nucleotidase that shows phosphatase activity on nucleoside 5'-monophosphates. In Erythrobacter litoralis (strain HTCC2594), this protein is 5'-nucleotidase SurE.